A 189-amino-acid chain; its full sequence is Small ribosomal subunit protein uS5 (189 aa).

Residues 27-90 (FEERLLEAAR…EDAKKKTIRV (64 aa)) enclose the S5 DRBM domain.

It belongs to the universal ribosomal protein uS5 family. Part of the 30S ribosomal subunit. Contacts proteins S4 and S8.

In terms of biological role, with S4 and S12 plays an important role in translational accuracy. Its function is as follows. Located at the back of the 30S subunit body where it stabilizes the conformation of the head with respect to the body. This is Small ribosomal subunit protein uS5 from Hydrogenobaculum sp. (strain Y04AAS1).